The primary structure comprises 278 residues: Formamidopyrimidine-DNA glycosylase (278 aa).

The Schiff-base intermediate with DNA role is filled by Pro2. The active-site Proton donor is Glu3. Lys57 serves as the catalytic Proton donor; for beta-elimination activity. DNA contacts are provided by His90, Arg109, and Lys150. An FPG-type zinc finger spans residues 235–269 (QVYGRAGEPCRQCGHPIEIAKHGQRSTFFCRHCQF). The Proton donor; for delta-elimination activity role is filled by Arg259.

This sequence belongs to the FPG family. Monomer. Zn(2+) is required as a cofactor.

The catalysed reaction is Hydrolysis of DNA containing ring-opened 7-methylguanine residues, releasing 2,6-diamino-4-hydroxy-5-(N-methyl)formamidopyrimidine.. It carries out the reaction 2'-deoxyribonucleotide-(2'-deoxyribose 5'-phosphate)-2'-deoxyribonucleotide-DNA = a 3'-end 2'-deoxyribonucleotide-(2,3-dehydro-2,3-deoxyribose 5'-phosphate)-DNA + a 5'-end 5'-phospho-2'-deoxyribonucleoside-DNA + H(+). Involved in base excision repair of DNA damaged by oxidation or by mutagenic agents. Acts as a DNA glycosylase that recognizes and removes damaged bases. Has a preference for oxidized purines, such as 7,8-dihydro-8-oxoguanine (8-oxoG). Has AP (apurinic/apyrimidinic) lyase activity and introduces nicks in the DNA strand. Cleaves the DNA backbone by beta-delta elimination to generate a single-strand break at the site of the removed base with both 3'- and 5'-phosphates. The chain is Formamidopyrimidine-DNA glycosylase from Yersinia pestis (strain Pestoides F).